A 369-amino-acid chain; its full sequence is Core-capsid bridging protein (369 aa).

Residues 15–50 (APEIYGPPKKEEQDYKPRKLKRVKKKKKDDDDDELD) form a disordered region. Positions 22 to 31 (PKKEEQDYKP) are enriched in basic and acidic residues. The span at 32–41 (RKLKRVKKKK) shows a compositional bias: basic residues. Threonine 85 is subject to Phosphothreonine; by host. Position 166 is a phosphoserine; by host (serine 166). Residues 307-342 (PGYRGYTYRPRRRATTRRRTTTGTRRRRRRRQPVLA) are disordered. The segment covering 315 to 338 (RPRRRATTRRRTTTGTRRRRRRRQ) has biased composition (basic residues).

It belongs to the adenoviridae core-capsid bridging protein family. As to quaternary structure, monomer. Homodimer. Exists in equilibrium between monomers and dimers in solution. Interacts with the histone-like nucleoprotein; this interactions bridge the virus core to the capsid. Interacts with core protein X; this interactions bridge the virus core to the capsid. Interacts with the endosome lysis protein VI; this interactions bridge the virus core to the capsid. Interacts with the peripentonal hexons. Interacts with host NPM1; this interaction might play a role in virus assembly.

The protein resides in the virion. It localises to the host nucleus. It is found in the host nucleolus. Associates loosely with the viral DNA to form an outer shell around the nucleoprotein-DNA complex and links it with the capsid by binding the endosome lysis protein. Dissociates from the viral genome during entry. Might be involved in nuclear capsid assembly of the viral particles through its association with NPM1/nucleophosmin. The polypeptide is Core-capsid bridging protein (Homo sapiens (Human)).